A 190-amino-acid polypeptide reads, in one-letter code: Frizzled-6 (190 aa).

Residues 1–20 (FGFAWPEELECSRLVNCDET) enclose the FZ domain. The Extracellular portion of the chain corresponds to 1 to 89 (FGFAWPEELE…NYELDVAKSF (89 aa)). Residues 90-110 (IGIVSIFCLCATLFTFLTFLI) traverse the membrane as a helical segment. The Cytoplasmic segment spans residues 111–121 (DVKRFRYPERP). A helical membrane pass occupies residues 122–142 (IIYYSVCYSIVSLMYFIGFLL). Topologically, residues 143-169 (GNRTACNKADDKLEIGETVVLGSQNKA) are extracellular. N-linked (GlcNAc...) asparagine glycosylation is present at Asn-144. A helical transmembrane segment spans residues 170–190 (CTVLFMVLYFFTMAGTIWWVI).

Belongs to the G-protein coupled receptor Fz/Smo family.

Its subcellular location is the membrane. It localises to the cell membrane. It is found in the cell surface. The protein resides in the apical cell membrane. The protein localises to the cytoplasmic vesicle membrane. In terms of biological role, receptor for Wnt proteins. Most of frizzled receptors are coupled to the beta-catenin canonical signaling pathway, which leads to the activation of disheveled proteins, inhibition of GSK-3 kinase, nuclear accumulation of beta-catenin and activation of Wnt target genes. A second signaling pathway involving PKC and calcium fluxes has been seen for some family members, but it is not yet clear if it represents a distinct pathway or if it can be integrated in the canonical pathway, as PKC seems to be required for Wnt-mediated inactivation of GSK-3 kinase. Both pathways seem to involve interactions with G-proteins. Activation by Wnt5A stimulates PKC activity via a G-protein-dependent mechanism. Involved in transduction and intercellular transmission of polarity information during tissue morphogenesis and/or in differentiated tissues. Together with FZD3, may be involved in the neural tube closure and plays a role in the regulation of the establishment of planar cell polarity (PCP), particularly in the orientation of asymmetric bundles of stereocilia on the apical faces of a subset of auditory and vestibular sensory cells located in the inner ear. The protein is Frizzled-6 (FZD6) of Gallus gallus (Chicken).